We begin with the raw amino-acid sequence, 116 residues long: uncharacterized protein (116 aa).

Positions 64–116 (RRFYSGTVNRNARSAGAASRSTSSVKRPLESKKRNARPETEKWCASYSAGNRR) are disordered. The segment covering 73–87 (RNARSAGAASRSTSS) has biased composition (low complexity). The span at 90–105 (RPLESKKRNARPETEK) shows a compositional bias: basic and acidic residues.

This is an uncharacterized protein from Saccharomyces cerevisiae (strain ATCC 204508 / S288c) (Baker's yeast).